We begin with the raw amino-acid sequence, 125 residues long: MARIAGIDLPREKRIVVGLTYIFGIGNSLSRVILKKAGIDESIRVKDLNESQEAAIRKALEESAKVEGDLRSEIQLNIKRLMDIGCYRGLRHRRGLPVNGQRTRTNARTRKGGKKTVANKKKVTK.

The segment at 95–125 is disordered; the sequence is GLPVNGQRTRTNARTRKGGKKTVANKKKVTK. The segment covering 105 to 125 has biased composition (basic residues); the sequence is TNARTRKGGKKTVANKKKVTK.

It belongs to the universal ribosomal protein uS13 family. Part of the 30S ribosomal subunit. Forms a loose heterodimer with protein S19. Forms two bridges to the 50S subunit in the 70S ribosome.

In terms of biological role, located at the top of the head of the 30S subunit, it contacts several helices of the 16S rRNA. In the 70S ribosome it contacts the 23S rRNA (bridge B1a) and protein L5 of the 50S subunit (bridge B1b), connecting the 2 subunits; these bridges are implicated in subunit movement. Contacts the tRNAs in the A and P-sites. This is Small ribosomal subunit protein uS13 from Leptospira borgpetersenii serovar Hardjo-bovis (strain L550).